We begin with the raw amino-acid sequence, 109 residues long: Large ribosomal subunit protein uL22 (109 aa).

The protein belongs to the universal ribosomal protein uL22 family. Part of the 50S ribosomal subunit.

Functionally, this protein binds specifically to 23S rRNA; its binding is stimulated by other ribosomal proteins, e.g. L4, L17, and L20. It is important during the early stages of 50S assembly. It makes multiple contacts with different domains of the 23S rRNA in the assembled 50S subunit and ribosome. Its function is as follows. The globular domain of the protein is located near the polypeptide exit tunnel on the outside of the subunit, while an extended beta-hairpin is found that lines the wall of the exit tunnel in the center of the 70S ribosome. The polypeptide is Large ribosomal subunit protein uL22 (Cupriavidus metallidurans (strain ATCC 43123 / DSM 2839 / NBRC 102507 / CH34) (Ralstonia metallidurans)).